The sequence spans 95 residues: Microcin E492 immunity protein (95 aa).

Transmembrane regions (helical) follow at residues 1-21 (MTLLSFGFSPVFFSVMAFCII), 35-55 (VIVLILLTFFICFLYPLTKVY), and 67-87 (YLFCFISTLIAIAINVVILTI).

This sequence belongs to the MceB microcin immunity protein family.

It localises to the cell inner membrane. Protect the producing cell against microcin E492. The polypeptide is Microcin E492 immunity protein (Klebsiella pneumoniae).